A 175-amino-acid chain; its full sequence is MYLARTRFLFFLASLACASIIGVAFYLQQAVGLDPCTLCMVQRAAFIACGVLALCAACHAPGPTGTRRYSLGLLLVALAGLAGAGTQVWLQTASADQLIPFITRLEQILSLLSLDMCIDRLRSDALFCAEITWTLFGISLPEWSLLAFTGLALLPLYPLFSELSHWLATRDRGGY.

Residues 1–9 (MYLARTRFL) are Cytoplasmic-facing. The helical transmembrane segment at 10-26 (FFLASLACASIIGVAFY) threads the bilayer. The Periplasmic portion of the chain corresponds to 27–44 (LQQAVGLDPCTLCMVQRA). Cysteine 36 and cysteine 39 form a disulfide bridge. A helical membrane pass occupies residues 45-61 (AFIACGVLALCAACHAP). Residues 62–68 (GPTGTRR) are Cytoplasmic-facing. A helical transmembrane segment spans residues 69 to 85 (YSLGLLLVALAGLAGAG). The Periplasmic segment spans residues 86–142 (TQVWLQTASADQLIPFITRLEQILSLLSLDMCIDRLRSDALFCAEITWTLFGISLPE). Residues 143 to 161 (WSLLAFTGLALLPLYPLFS) traverse the membrane as a helical segment. The Cytoplasmic portion of the chain corresponds to 162–175 (ELSHWLATRDRGGY).

Belongs to the DsbB family.

Its subcellular location is the cell inner membrane. Functionally, required for disulfide bond formation in some periplasmic proteins. Acts by oxidizing the DsbA protein. This is Disulfide bond formation protein B 2 from Pseudomonas syringae pv. syringae (strain B728a).